A 1055-amino-acid polypeptide reads, in one-letter code: Auxin response factor 16 (1055 aa).

A DNA-binding region (TF-B3) is located at residues 127–229 (FCKTLTASDT…QLLLGIRRAT (103 aa)). Disordered stretches follow at residues 485-510 (PVMS…QQSS), 532-565 (QEHL…EQTS), 585-609 (SQLQ…PIAG), 701-720 (SDSI…LNHM), and 732-769 (SHSA…SRNL). Composition is skewed to low complexity over residues 488–510 (SQHQ…QQSS) and 532–552 (QEHL…ASSL). The span at 742 to 756 (PSSSTAPSTSRISPI) shows a compositional bias: low complexity. The segment covering 757–769 (NSLSRANQGSRNL) has biased composition (polar residues). The 85-residue stretch at 940–1024 (RTFTKVQKRG…KSIKILSAAE (85 aa)) folds into the PB1 domain. The segment at 1034-1055 (LGGVPPQTQACSASDDANAWRG) is disordered.

It belongs to the ARF family. Homodimers and heterodimers. In terms of tissue distribution, expressed in roots, culms, leaves and young panicles.

Its subcellular location is the nucleus. Auxin response factors (ARFs) are transcriptional factors that bind specifically to the DNA sequence 5'-TGTCTC-3' found in the auxin-responsive promoter elements (AuxREs). The chain is Auxin response factor 16 (ARF16) from Oryza sativa subsp. japonica (Rice).